The following is a 275-amino-acid chain: Small ribosomal subunit protein uS3 (275 aa).

The KH type-2 domain maps to Ile38–Lys106. The disordered stretch occupies residues Ala217–Ser275. The span at Ser238–Ser275 shows a compositional bias: low complexity.

Belongs to the universal ribosomal protein uS3 family. Part of the 30S ribosomal subunit. Forms a tight complex with proteins S10 and S14.

Binds the lower part of the 30S subunit head. Binds mRNA in the 70S ribosome, positioning it for translation. This is Small ribosomal subunit protein uS3 from Mycobacterium marinum (strain ATCC BAA-535 / M).